The following is a 207-amino-acid chain: Small ribosomal subunit protein uS4A (207 aa).

The S4 RNA-binding domain occupies 98–163; that stretch reads TRLDNLVYRL…SPKFKELKEN (66 aa).

It belongs to the universal ribosomal protein uS4 family. Part of the 30S ribosomal subunit. Contacts protein S5. The interaction surface between S4 and S5 is involved in control of translational fidelity.

In terms of biological role, one of the primary rRNA binding proteins, it binds directly to 16S rRNA where it nucleates assembly of the body of the 30S subunit. Functionally, with S5 and S12 plays an important role in translational accuracy. This Alkaliphilus metalliredigens (strain QYMF) protein is Small ribosomal subunit protein uS4A.